A 366-amino-acid polypeptide reads, in one-letter code: uncharacterized protein (366 aa).

Glutamate 139 acts as the Proton donor in catalysis. Glutamate 249 serves as the catalytic Nucleophile.

This sequence belongs to the glycosyl hydrolase 53 family.

This is an uncharacterized protein from Niallia circulans (Bacillus circulans).